A 205-amino-acid chain; its full sequence is Ras-related protein RABC2b (205 aa).

20–27 (GDSGVGKS) is a binding site for GTP. Residues 41-49 (LAPTIGVDF) carry the Effector region motif. GTP-binding positions include 67-71 (DTAGQ), 127-130 (NKVD), and 157-158 (SA). 2 S-geranylgeranyl cysteine lipidation sites follow: C202 and C203.

Belongs to the small GTPase superfamily. Rab family.

It is found in the cell membrane. Its function is as follows. Intracellular vesicle trafficking and protein transport. The protein is Ras-related protein RABC2b (RABC2B) of Arabidopsis thaliana (Mouse-ear cress).